The primary structure comprises 292 residues: ATP synthase gamma chain (292 aa).

It belongs to the ATPase gamma chain family. F-type ATPases have 2 components, CF(1) - the catalytic core - and CF(0) - the membrane proton channel. CF(1) has five subunits: alpha(3), beta(3), gamma(1), delta(1), epsilon(1). CF(0) has three main subunits: a, b and c.

It is found in the cell membrane. Its function is as follows. Produces ATP from ADP in the presence of a proton gradient across the membrane. The gamma chain is believed to be important in regulating ATPase activity and the flow of protons through the CF(0) complex. In Streptococcus suis (strain 05ZYH33), this protein is ATP synthase gamma chain.